Reading from the N-terminus, the 212-residue chain is Pyridoxine/pyridoxamine 5'-phosphate oxidase (212 aa).

Substrate contacts are provided by residues 7–10 (RREY) and Lys66. Residues 61–66 (RIVLLK), 76–77 (YT), Lys83, and Gln105 each bind FMN. 3 residues coordinate substrate: Tyr123, Arg127, and Ser131. Residues 140 to 141 (QS) and Trp185 each bind FMN. 191–193 (RLH) provides a ligand contact to substrate. FMN is bound at residue Arg195.

Belongs to the pyridoxamine 5'-phosphate oxidase family. Homodimer. Requires FMN as cofactor.

It carries out the reaction pyridoxamine 5'-phosphate + O2 + H2O = pyridoxal 5'-phosphate + H2O2 + NH4(+). The enzyme catalyses pyridoxine 5'-phosphate + O2 = pyridoxal 5'-phosphate + H2O2. It participates in cofactor metabolism; pyridoxal 5'-phosphate salvage; pyridoxal 5'-phosphate from pyridoxamine 5'-phosphate: step 1/1. The protein operates within cofactor metabolism; pyridoxal 5'-phosphate salvage; pyridoxal 5'-phosphate from pyridoxine 5'-phosphate: step 1/1. Its function is as follows. Catalyzes the oxidation of either pyridoxine 5'-phosphate (PNP) or pyridoxamine 5'-phosphate (PMP) into pyridoxal 5'-phosphate (PLP). The chain is Pyridoxine/pyridoxamine 5'-phosphate oxidase from Idiomarina loihiensis (strain ATCC BAA-735 / DSM 15497 / L2-TR).